The following is a 263-amino-acid chain: Mediator of RNA polymerase II transcription subunit 4 (263 aa).

Residues 61 to 111 are a coiled coil; the sequence is LQLAAEQAGIEKNMDALREQVRKQDEEINQLQRQLKEAEQILATSIFQARQ. Disordered stretches follow at residues 209-228 and 235-263; these read APNQFAWHPSGELHMSMGAG and DTRAHKDASQDDVEVMSTESSSSSSSDSQ. Positions 251-263 are enriched in low complexity; that stretch reads STESSSSSSSDSQ.

It belongs to the Mediator complex subunit 4 family. In terms of assembly, component of the Mediator complex.

It is found in the nucleus. Functionally, component of the Mediator complex, a coactivator involved in the regulated transcription of nearly all RNA polymerase II-dependent genes. Mediator functions as a bridge to convey information from gene-specific regulatory proteins to the basal RNA polymerase II transcription machinery. Mediator is recruited to promoters by direct interactions with regulatory proteins and serves as a scaffold for the assembly of a functional preinitiation complex with RNA polymerase II and the general transcription factors. This chain is Mediator of RNA polymerase II transcription subunit 4 (MED4), found in Anopheles gambiae (African malaria mosquito).